The sequence spans 151 residues: Ubiquitin-conjugating enzyme E2 W (151 aa).

M1 participates in a covalent cross-link: Peptide (Met-Gly) (interchain with G-Cter in ubiquitin). The 149-residue stretch at 3–151 (SMQKRLQKEL…TKWWYHDDTC (149 aa)) folds into the UBC core domain. C91 acts as the Glycyl thioester intermediate in catalysis.

The protein belongs to the ubiquitin-conjugating enzyme family. In terms of assembly, homodimer. Interacts with FANCL. Interacts with STUB1/CHIP. Post-translationally, ubiquitinated in vitro in the presence of FANCL. Autoubiquitinated at Met-1.

It localises to the nucleus. It carries out the reaction S-ubiquitinyl-[E1 ubiquitin-activating enzyme]-L-cysteine + [E2 ubiquitin-conjugating enzyme]-L-cysteine = [E1 ubiquitin-activating enzyme]-L-cysteine + S-ubiquitinyl-[E2 ubiquitin-conjugating enzyme]-L-cysteine.. It catalyses the reaction S-ubiquitinyl-[E1 ubiquitin-activating enzyme]-L-cysteine + [acceptor protein]-N-terminal-amino acid = [E1 ubiquitin-activating enzyme]-L-cysteine + N-terminal-ubiquitinyl-[acceptor protein].. It participates in protein modification; protein ubiquitination. Functionally, accepts ubiquitin from the E1 complex and catalyzes its covalent attachment to other proteins. Specifically monoubiquitinates the N-terminus of various substrates, including ATXN3, MAPT/TAU, POLR2H/RPB8 and STUB1/CHIP, by recognizing backbone atoms of disordered N-termini. Involved in degradation of misfolded chaperone substrates by mediating monoubiquitination of STUB1/CHIP, leading to recruitment of ATXN3 to monoubiquitinated STUB1/CHIP, and restriction of the length of ubiquitin chain attached to STUB1/CHIP substrates by ATXN3. After UV irradiation, but not after mitomycin-C (MMC) treatment, acts as a specific E2 ubiquitin-conjugating enzyme for the Fanconi anemia complex by associating with E3 ubiquitin-protein ligase FANCL and catalyzing monoubiquitination of FANCD2, a key step in the DNA damage pathway. In vitro catalyzes 'Lys-11'-linked polyubiquitination. UBE2W-catalyzed ubiquitination also occurs in the presence of inactive RING/U-box type E3s, i.e. lacking the active site cysteine residues to form thioester bonds with ubiquitin, or even in the absence of E3, albeit at a slower rate. The chain is Ubiquitin-conjugating enzyme E2 W (UBE2W) from Bos taurus (Bovine).